The primary structure comprises 483 residues: Glutamate--tRNA ligase (483 aa).

The short motif at 14-24 is the 'HIGH' region element; that stretch reads PSPTGDPHVGT. Positions 253-257 match the 'KMSKS' region motif; the sequence is KISKR. Position 256 (Lys-256) interacts with ATP.

This sequence belongs to the class-I aminoacyl-tRNA synthetase family. Glutamate--tRNA ligase type 1 subfamily. In terms of assembly, monomer.

The protein resides in the cytoplasm. It catalyses the reaction tRNA(Glu) + L-glutamate + ATP = L-glutamyl-tRNA(Glu) + AMP + diphosphate. Its function is as follows. Catalyzes the attachment of glutamate to tRNA(Glu) in a two-step reaction: glutamate is first activated by ATP to form Glu-AMP and then transferred to the acceptor end of tRNA(Glu). The protein is Glutamate--tRNA ligase of Deinococcus radiodurans (strain ATCC 13939 / DSM 20539 / JCM 16871 / CCUG 27074 / LMG 4051 / NBRC 15346 / NCIMB 9279 / VKM B-1422 / R1).